Here is a 146-residue protein sequence, read N- to C-terminus: Protein PBDC1 homolog (146 aa).

Belongs to the PBDC1 family.

The protein resides in the cytoplasm. The polypeptide is Protein PBDC1 homolog (Saccharomyces cerevisiae (strain ATCC 204508 / S288c) (Baker's yeast)).